A 242-amino-acid chain; its full sequence is Large ribosomal subunit protein uL1 (242 aa).

Belongs to the universal ribosomal protein uL1 family. In terms of assembly, part of the 50S ribosomal subunit.

In terms of biological role, binds directly to 23S rRNA. The L1 stalk is quite mobile in the ribosome, and is involved in E site tRNA release. Protein L1 is also a translational repressor protein, it controls the translation of the L11 operon by binding to its mRNA. The chain is Large ribosomal subunit protein uL1 from Wigglesworthia glossinidia brevipalpis.